The following is a 385-amino-acid chain: G2/mitotic-specific cyclin-B3 (385 aa).

Polar residues predominate over residues 1–16; it reads MMLRSQAKNVDLTSQA. Disordered stretches follow at residues 1-48 and 63-88; these read MMLR…HSKG and SAKR…QKSR. Basic and acidic residues-rich tracts occupy residues 17 to 28 and 63 to 80; these read DSRHQQKRKQAE and SAKR…RDVE.

This sequence belongs to the cyclin family. Cyclin AB subfamily.

Its subcellular location is the nucleus. In terms of biological role, could be involved at the G2/M (mitosis) transition. Interacts with the CDK1 and CDK2 protein kinases. G2/M cyclins accumulate steadily during G2 and are abruptly destroyed at mitosis. Plays a role during oocyte meiosis II. This is G2/mitotic-specific cyclin-B3 (cyb-3) from Caenorhabditis elegans.